The following is a 350-amino-acid chain: Nicotinate-nucleotide--dimethylbenzimidazole phosphoribosyltransferase (350 aa).

Catalysis depends on E317, which acts as the Proton acceptor.

The protein belongs to the CobT family.

The enzyme catalyses 5,6-dimethylbenzimidazole + nicotinate beta-D-ribonucleotide = alpha-ribazole 5'-phosphate + nicotinate + H(+). The protein operates within nucleoside biosynthesis; alpha-ribazole biosynthesis; alpha-ribazole from 5,6-dimethylbenzimidazole: step 1/2. Catalyzes the synthesis of alpha-ribazole-5'-phosphate from nicotinate mononucleotide (NAMN) and 5,6-dimethylbenzimidazole (DMB). In Shewanella oneidensis (strain ATCC 700550 / JCM 31522 / CIP 106686 / LMG 19005 / NCIMB 14063 / MR-1), this protein is Nicotinate-nucleotide--dimethylbenzimidazole phosphoribosyltransferase.